A 112-amino-acid polypeptide reads, in one-letter code: Iron-sulfur cluster assembly protein CyaY (112 aa).

The protein belongs to the frataxin family.

Its function is as follows. Involved in iron-sulfur (Fe-S) cluster assembly. May act as a regulator of Fe-S biogenesis. The polypeptide is Iron-sulfur cluster assembly protein CyaY (Delftia acidovorans (strain DSM 14801 / SPH-1)).